The following is a 75-amino-acid chain: UPF0352 protein VP2129 (75 aa).

This sequence belongs to the UPF0352 family.

This is UPF0352 protein VP2129 from Vibrio parahaemolyticus serotype O3:K6 (strain RIMD 2210633).